The sequence spans 78 residues: Omega-conotoxin-like SO-4 (78 aa).

A signal peptide spans 1–22 (MKLTCMVIVAVLLLTACQLITA). Residues 23-42 (DDSRGTQKHRSLRSTTKVSK) constitute a propeptide that is removed on maturation. 3 disulfide bridges follow: cysteine 46–cysteine 62, cysteine 53–cysteine 65, and cysteine 61–cysteine 72.

Belongs to the conotoxin O1 superfamily. As to expression, expressed by the venom duct.

It localises to the secreted. In terms of biological role, omega-conotoxins act at presynaptic membranes, they bind and block voltage-gated calcium channels (Cav). In Conus striatus (Striated cone), this protein is Omega-conotoxin-like SO-4 (SO4).